The following is a 330-amino-acid chain: D-alanine--D-alanine ligase (330 aa).

The region spanning 120 to 326 is the ATP-grasp domain; the sequence is KLWYDALGIP…FKTFLQKAVL (207 aa). Position 150–205 (150–205) interacts with ATP; the sequence is AFKQWGGLFVKAACQGSSVGCYKVTSEAELSKAINDAFGYSQQVLVEKAVKPRELE. Residues D280, E293, and N295 each coordinate Mg(2+).

Belongs to the D-alanine--D-alanine ligase family. Mg(2+) serves as cofactor. The cofactor is Mn(2+).

The protein localises to the cytoplasm. It carries out the reaction 2 D-alanine + ATP = D-alanyl-D-alanine + ADP + phosphate + H(+). Its pathway is cell wall biogenesis; peptidoglycan biosynthesis. In terms of biological role, cell wall formation. This chain is D-alanine--D-alanine ligase, found in Aliivibrio fischeri (strain ATCC 700601 / ES114) (Vibrio fischeri).